Consider the following 678-residue polypeptide: Protein CASP (678 aa).

The Cytoplasmic portion of the chain corresponds to 1 to 619; sequence MAANVGSMSQ…LILSNKTART (619 aa). Coiled coils occupy residues 16–40, 67–374, 427–454, and 502–556; these read DLQQ…ESEQ, LLKS…TLKS, HLTE…TIQS, and LSII…FLQS. Ser586 is modified (phosphoserine). A helical; Anchor for type IV membrane protein membrane pass occupies residues 620-640; sequence IGFFYTLFLHCLVFLVLYKLA. Topologically, residues 641–678 are lumenal; it reads WSESVERDCAATCAKKFADHLHKFHESDNGAAAGDLWQ.

It belongs to the CASP family. Homodimer; disulfide-linked. Interacts with GOLGA5. Ubiquitously expressed.

It localises to the golgi apparatus membrane. May be involved in intra-Golgi retrograde transport. The sequence is that of Protein CASP (Cux1) from Mus musculus (Mouse).